The sequence spans 345 residues: Opioid-binding protein/cell adhesion molecule (345 aa).

A signal peptide spans 1–27 (MGVCGSLFQPWKCLVVVSLRLLFLVPT). Ig-like C2-type domains are found at residues 39–126 (PKAM…PKTS), 136–219 (PQIM…VKIT), and 223–310 (PPYI…ASIT). Residues asparagine 44, asparagine 70, and asparagine 140 are each glycosylated (N-linked (GlcNAc...) asparagine). The cysteines at positions 57 and 115 are disulfide-linked. 2 disulfides stabilise this stretch: cysteine 157-cysteine 202 and cysteine 244-cysteine 296. 3 N-linked (GlcNAc...) asparagine glycosylation sites follow: asparagine 285, asparagine 293, and asparagine 306. A lipid anchor (GPI-anchor amidated asparagine) is attached at asparagine 322. Positions 323–345 (SASRALACLWLSGTLFAHFFIKF) are cleaved as a propeptide — removed in mature form.

Belongs to the immunoglobulin superfamily. IgLON family.

The protein localises to the cell membrane. Functionally, binds opioids in the presence of acidic lipids; probably involved in cell contact. The protein is Opioid-binding protein/cell adhesion molecule (OPCML) of Bos taurus (Bovine).